The chain runs to 70 residues: UPF0426 protein ssl0294 (70 aa).

Belongs to the UPF0426 family.

The sequence is that of UPF0426 protein ssl0294 from Synechocystis sp. (strain ATCC 27184 / PCC 6803 / Kazusa).